The sequence spans 128 residues: Anion exchange transporter (128 aa).

At 1–14 the chain is on the extracellular side; the sequence is LFSFKELNEQFKRK. Residues 15–35 form a helical membrane-spanning segment; it reads IKVVLPVDLVLIIAASFACYC. Residues 36–66 are Cytoplasmic-facing; the sequence is TNMENTYGLEVVGHIPRGIPPPRAPPMNILS. A helical membrane pass occupies residues 67 to 87; it reads AVITEAFGVALVGYAASLALA. Over 88 to 103 the chain is Extracellular; that stretch reads QGSAKKFKYSVDDNQE. The helical transmembrane segment at 104-124 threads the bilayer; the sequence is FLAHGLSNVISSFLFCIPSAA. Topologically, residues 125–128 are cytoplasmic; that stretch reads AMGR.

This sequence belongs to the SLC26A/SulP transporter (TC 2.A.53) family. In terms of tissue distribution, expressed in gastric epithelium, predominantly in the gastric parietal cells but also at lower levels in mucosal cells.

It is found in the basolateral cell membrane. The protein resides in the recycling endosome membrane. The protein localises to the apical cell membrane. It localises to the lateral cell membrane. It carries out the reaction chloride(in) = chloride(out). It catalyses the reaction iodide(out) = iodide(in). The catalysed reaction is bromide(in) = bromide(out). The enzyme catalyses oxalate(in) = oxalate(out). It carries out the reaction nitrate(in) = nitrate(out). It catalyses the reaction sulfate(in) = sulfate(out). The catalysed reaction is D-gluconate(in) = D-gluconate(out). The enzyme catalyses thiocyanate(in) = thiocyanate(out). It carries out the reaction hydrogencarbonate(in) = hydrogencarbonate(out). It catalyses the reaction hydrogencarbonate(in) + chloride(out) = hydrogencarbonate(out) + chloride(in). Its function is as follows. Acts as an anion channel mediating the transport of chloride, bromide, iodide, nitrate, sulfate, gluconate, thiocyanate, oxalate and bicarbonate ions. Its permeability towards bicarbonate is weak and increases when pH is above 7. Mediates thiocyanate transport in retinal pigment epithelium cells. Mediates iodide transport in the thyroid gland, playing an important role in the synthesis of thyroid hormones and the maintenance of thyroid function. This chain is Anion exchange transporter, found in Oryctolagus cuniculus (Rabbit).